We begin with the raw amino-acid sequence, 307 residues long: Protoheme IX farnesyltransferase (307 aa).

The next 9 membrane-spanning stretches (helical) occupy residues 29 to 49 (VISL…RGWP), 51 to 71 (LGLL…AGVF), 101 to 120 (AAIF…WVWA), 124 to 143 (AAWM…TLWL), 151 to 171 (IVLG…AVTG), 179 to 199 (FLFA…ALMI), 218 to 238 (RLTV…SVMP), 239 to 259 (VFLG…GWLL), and 280 to 300 (VAVP…VAGA).

It belongs to the UbiA prenyltransferase family. Protoheme IX farnesyltransferase subfamily.

It is found in the cell membrane. It carries out the reaction heme b + (2E,6E)-farnesyl diphosphate + H2O = Fe(II)-heme o + diphosphate. It participates in porphyrin-containing compound metabolism; heme O biosynthesis; heme O from protoheme: step 1/1. Functionally, converts heme B (protoheme IX) to heme O by substitution of the vinyl group on carbon 2 of heme B porphyrin ring with a hydroxyethyl farnesyl side group. This Deinococcus geothermalis (strain DSM 11300 / CIP 105573 / AG-3a) protein is Protoheme IX farnesyltransferase.